Here is a 763-residue protein sequence, read N- to C-terminus: Phosphoglycerol transferase I (763 aa).

Transmembrane regions (helical) follow at residues 4 to 19 (LLSV…IYAW), 26 to 48 (WWFA…LYAS), 76 to 98 (YILP…GWVL), and 110 to 132 (YSLL…RQIT).

The protein belongs to the OpgB family.

The protein localises to the cell inner membrane. It catalyses the reaction a phosphatidylglycerol + a membrane-derived-oligosaccharide D-glucose = a 1,2-diacyl-sn-glycerol + a membrane-derived-oligosaccharide 6-(glycerophospho)-D-glucose.. It participates in glycan metabolism; osmoregulated periplasmic glucan (OPG) biosynthesis. Its function is as follows. Transfers a phosphoglycerol residue from phosphatidylglycerol to the membrane-bound nascent glucan backbones. This is Phosphoglycerol transferase I from Salmonella typhi.